A 546-amino-acid chain; its full sequence is Chaperonin GroEL (546 aa).

ATP is bound by residues 29-32 (TMGP), K50, 86-90 (DGTTT), G412, 476-478 (NAA), and D492.

It belongs to the chaperonin (HSP60) family. Forms a cylinder of 14 subunits composed of two heptameric rings stacked back-to-back. Interacts with the co-chaperonin GroES.

The protein resides in the cytoplasm. It catalyses the reaction ATP + H2O + a folded polypeptide = ADP + phosphate + an unfolded polypeptide.. In terms of biological role, together with its co-chaperonin GroES, plays an essential role in assisting protein folding. The GroEL-GroES system forms a nano-cage that allows encapsulation of the non-native substrate proteins and provides a physical environment optimized to promote and accelerate protein folding. Functionally, may play a protective role against the defense mechanisms generated by the infected macrophages. This Legionella micdadei (Tatlockia micdadei) protein is Chaperonin GroEL.